A 945-amino-acid polypeptide reads, in one-letter code: Isoleucine--tRNA ligase (945 aa).

Positions 1 to 10 (MSNKKADSKP) are enriched in basic and acidic residues. The segment at 1-21 (MSNKKADSKPQAKYPVNLLDT) is disordered. The short motif at 66-76 (PYANGDIHLGH) is the 'HIGH' region element. Glu-581 serves as a coordination point for L-isoleucyl-5'-AMP. The short motif at 622–626 (KMSKS) is the 'KMSKS' region element. ATP is bound at residue Lys-625. Zn(2+)-binding residues include Cys-908, Cys-911, Cys-928, and Cys-931.

It belongs to the class-I aminoacyl-tRNA synthetase family. IleS type 1 subfamily. As to quaternary structure, monomer. Requires Zn(2+) as cofactor.

It localises to the cytoplasm. It carries out the reaction tRNA(Ile) + L-isoleucine + ATP = L-isoleucyl-tRNA(Ile) + AMP + diphosphate. Functionally, catalyzes the attachment of isoleucine to tRNA(Ile). As IleRS can inadvertently accommodate and process structurally similar amino acids such as valine, to avoid such errors it has two additional distinct tRNA(Ile)-dependent editing activities. One activity is designated as 'pretransfer' editing and involves the hydrolysis of activated Val-AMP. The other activity is designated 'posttransfer' editing and involves deacylation of mischarged Val-tRNA(Ile). This is Isoleucine--tRNA ligase from Burkholderia multivorans (strain ATCC 17616 / 249).